The following is a 710-amino-acid chain: Ephexin-1 (710 aa).

The span at M1–S20 shows a compositional bias: basic and acidic residues. Residues M1–D146 form a disordered region. The interval M1–I272 is regulatory region; modulates activity toward RHOA, RAC1 and CDC42. The segment covering Q123–T137 has biased composition (polar residues). Phosphotyrosine is present on Y177. Residues R192–R234 form a disordered region. Positions D211–L227 are enriched in acidic residues. The DH domain occupies R273 to G457. Residues W489–R601 enclose the PH domain. Positions L612–N673 constitute an SH3 domain. Residues H688–K699 show a composition bias toward basic and acidic residues. The disordered stretch occupies residues H688–Q710. A compositionally biased stretch (basic residues) spans D700 to Q710.

As to quaternary structure, interacts with CDK5R1 and EPHA4; activated by EPHA4 through the CDK5 kinase. In terms of processing, src-dependent phosphorylation at Tyr-177 upon EPHA4 activation increases the guanine exchange factor activity toward RHOA. Phosphorylation by CDK5 upon EPHA4 activation by EFNA1 may regulate dendritic spine morphogenesis. Highly expressed in brain and to a lower extent in eye.

It is found in the cytoplasm. The protein resides in the membrane. The protein localises to the cell projection. Its subcellular location is the growth cone. In terms of biological role, acts as a guanine nucleotide exchange factor (GEF) which differentially activates the GTPases RHOA, RAC1 and CDC42. Plays a role in axon guidance regulating ephrin-induced growth cone collapse and dendritic spine morphogenesis. Upon activation by ephrin through EPHA4, the GEF activity switches toward RHOA resulting in its activation. Activated RHOA promotes cone retraction at the expense of RAC1- and CDC42-stimulated growth cone extension. In Mus musculus (Mouse), this protein is Ephexin-1 (Ngef).